We begin with the raw amino-acid sequence, 92 residues long: UPF0250 protein COSY_0496 (92 aa).

The protein belongs to the UPF0250 family.

This is UPF0250 protein COSY_0496 from Vesicomyosocius okutanii subsp. Calyptogena okutanii (strain HA).